Consider the following 86-residue polypeptide: Acyl-CoA-binding protein homolog 1 (86 aa).

The ACB domain occupies Met-1–Ala-86. Residues Lys-13, Tyr-28–Lys-32, Lys-50, Lys-54, and Tyr-73 contribute to the an acyl-CoA site.

This sequence belongs to the ACBP family.

Its function is as follows. Binds medium- and long-chain acyl-CoA esters with very high affinity and may function as an intracellular carrier of acyl-CoA esters. This chain is Acyl-CoA-binding protein homolog 1 (acbp-1), found in Caenorhabditis elegans.